The following is a 167-amino-acid chain: UPF0262 protein Nwi_0248 (167 aa).

This sequence belongs to the UPF0262 family.

The polypeptide is UPF0262 protein Nwi_0248 (Nitrobacter winogradskyi (strain ATCC 25391 / DSM 10237 / CIP 104748 / NCIMB 11846 / Nb-255)).